The following is a 605-amino-acid chain: Ankyrin repeat domain-containing protein 13D (605 aa).

2 ANK repeats span residues 39–68 (RGRTPLELAVSLGNLESVRVLLRHNANVGK) and 72–101 (QGWAVLQEAVSTGDPEMVQLVLQYRDYQRA). The interval 306 to 333 (AQQHSSHTGAPVQQAASPTNPTAISPEE) is disordered. Positions 319 to 328 (QAASPTNPTA) are enriched in polar residues. UIM domains are found at residues 482–501 (EDDDLLQFAIQQSLLEAGTE) and 528–547 (EEQLQLERALQESLQLSTEP). The interval 541–605 (LQLSTEPRGP…RILQLSLTEH (65 aa)) is disordered. Residues 550–563 (PGSPPRTPPAPGPP) are compositionally biased toward pro residues. Serine 552 carries the phosphoserine modification. Residue threonine 556 is modified to Phosphothreonine. Residues 564 to 575 (SFEEQLRLALEL) show a composition bias toward low complexity. 2 consecutive UIM domains span residues 564-583 (SFEEQLRLALELSSREQEER) and 589-605 (QEEEDLQRILQLSLTEH). Residues 576–589 (SSREQEERERRGQQ) are compositionally biased toward basic and acidic residues.

In terms of assembly, interacts with EGFR (ubiquitinated); the interaction is direct and may regulate EGFR internalization.

The protein resides in the cell membrane. The protein localises to the late endosome. Functionally, ubiquitin-binding protein that specifically recognizes and binds 'Lys-63'-linked ubiquitin. Does not bind 'Lys-48'-linked ubiquitin. Positively regulates the internalization of ligand-activated EGFR by binding to the Ub moiety of ubiquitinated EGFR at the cell membrane. The polypeptide is Ankyrin repeat domain-containing protein 13D (ANKRD13D) (Homo sapiens (Human)).